The sequence spans 180 residues: uncharacterized protein (180 aa).

The interval 1-93 (MPSSVPKTSI…LPRRRNPGWV (93 aa)) is disordered. Low complexity-rich tracts occupy residues 9 to 25 (SIES…SQAS) and 47 to 64 (LTSS…SSSQ).

This is an uncharacterized protein from Homo sapiens (Human).